Consider the following 476-residue polypeptide: Ribulose bisphosphate carboxylase large chain (476 aa).

Positions 1-2 (MS) are excised as a propeptide. An N-acetylproline modification is found at proline 3. The residue at position 14 (lysine 14) is an N6,N6,N6-trimethyllysine. Substrate-binding residues include asparagine 123 and threonine 173. Lysine 175 serves as the catalytic Proton acceptor. A substrate-binding site is contributed by lysine 177. The Mg(2+) site is built by lysine 201, aspartate 203, and glutamate 204. Position 201 is an N6-carboxylysine (lysine 201). Histidine 294 acts as the Proton acceptor in catalysis. The substrate site is built by arginine 295, histidine 327, and serine 379.

The protein belongs to the RuBisCO large chain family. Type I subfamily. In terms of assembly, heterohexadecamer of 8 large chains and 8 small chains; disulfide-linked. The disulfide link is formed within the large subunit homodimers. Mg(2+) serves as cofactor. In terms of processing, the disulfide bond which can form in the large chain dimeric partners within the hexadecamer appears to be associated with oxidative stress and protein turnover.

The protein resides in the plastid. The protein localises to the chloroplast. The enzyme catalyses 2 (2R)-3-phosphoglycerate + 2 H(+) = D-ribulose 1,5-bisphosphate + CO2 + H2O. It carries out the reaction D-ribulose 1,5-bisphosphate + O2 = 2-phosphoglycolate + (2R)-3-phosphoglycerate + 2 H(+). Its function is as follows. RuBisCO catalyzes two reactions: the carboxylation of D-ribulose 1,5-bisphosphate, the primary event in carbon dioxide fixation, as well as the oxidative fragmentation of the pentose substrate in the photorespiration process. Both reactions occur simultaneously and in competition at the same active site. The sequence is that of Ribulose bisphosphate carboxylase large chain from Arenaria drummondii (Drummond sandwort).